Reading from the N-terminus, the 503-residue chain is Lactation elevated protein 1 homolog B (503 aa).

The disordered stretch occupies residues 108–155; that stretch reads LQNQPTSELQDKVGSRETVNICRPDENVSNEKEDQQEESSKPHPPQGY. Over residues 130–148 the composition is skewed to basic and acidic residues; sequence RPDENVSNEKEDQQEESSK. 159–166 contributes to the ATP binding site; that stretch reads GNVGTGKT.

Belongs to the AFG1 ATPase family.

The polypeptide is Lactation elevated protein 1 homolog B (lace1b) (Danio rerio (Zebrafish)).